The chain runs to 258 residues: Tryptophan synthase alpha chain (258 aa).

Residues glutamate 52 and aspartate 63 each act as proton acceptor in the active site.

This sequence belongs to the TrpA family. Tetramer of two alpha and two beta chains.

It catalyses the reaction (1S,2R)-1-C-(indol-3-yl)glycerol 3-phosphate + L-serine = D-glyceraldehyde 3-phosphate + L-tryptophan + H2O. Its pathway is amino-acid biosynthesis; L-tryptophan biosynthesis; L-tryptophan from chorismate: step 5/5. In terms of biological role, the alpha subunit is responsible for the aldol cleavage of indoleglycerol phosphate to indole and glyceraldehyde 3-phosphate. In Streptococcus pneumoniae (strain Taiwan19F-14), this protein is Tryptophan synthase alpha chain.